The chain runs to 96 residues: Co-chaperonin GroES (96 aa).

It belongs to the GroES chaperonin family. In terms of assembly, heptamer of 7 subunits arranged in a ring. Interacts with the chaperonin GroEL.

Its subcellular location is the cytoplasm. In terms of biological role, together with the chaperonin GroEL, plays an essential role in assisting protein folding. The GroEL-GroES system forms a nano-cage that allows encapsulation of the non-native substrate proteins and provides a physical environment optimized to promote and accelerate protein folding. GroES binds to the apical surface of the GroEL ring, thereby capping the opening of the GroEL channel. This is Co-chaperonin GroES from Histophilus somni (strain 129Pt) (Haemophilus somnus).